A 120-amino-acid chain; its full sequence is Large ribosomal subunit protein eL34 (120 aa).

It belongs to the eukaryotic ribosomal protein eL34 family.

This is Large ribosomal subunit protein eL34 (RPL34) from Nicotiana tabacum (Common tobacco).